The chain runs to 228 residues: Aldehyde dehydrogenase 9 (228 aa).

76–81 (GSTETA) provides a ligand contact to NAD(+). Catalysis depends on residues E99 and C132.

Belongs to the aldehyde dehydrogenase family.

It carries out the reaction an aldehyde + NAD(+) + H2O = a carboxylate + NADH + 2 H(+). It participates in alcohol metabolism; ethanol degradation; acetate from ethanol: step 2/2. The chain is Aldehyde dehydrogenase 9 (ALDH9) from Polyandrocarpa misakiensis (Tunicate).